A 350-amino-acid polypeptide reads, in one-letter code: tRNA pseudouridine synthase D (350 aa).

F27 lines the substrate pocket. The Nucleophile role is filled by D80. N129 serves as a coordination point for substrate. A TRUD domain is found at 155–303; it reads GVPNYFGVQR…VDTTRRAINL (149 aa). F329 lines the substrate pocket.

It belongs to the pseudouridine synthase TruD family.

The enzyme catalyses uridine(13) in tRNA = pseudouridine(13) in tRNA. In terms of biological role, responsible for synthesis of pseudouridine from uracil-13 in transfer RNAs. In Proteus mirabilis (strain HI4320), this protein is tRNA pseudouridine synthase D.